We begin with the raw amino-acid sequence, 615 residues long: 3-(3-hydroxy-phenyl)propionate/3-hydroxycinnamic acid hydroxylase 1 (615 aa).

The disordered stretch occupies residues 1–20 (MRPAFEPAAGLGRAHPHETT). FAD-binding positions include 27-56 (DVAI…VVEK) and 294-304 (FRVKRILLAGD).

This sequence belongs to the PheA/TfdB FAD monooxygenase family. The cofactor is FAD.

It catalyses the reaction 3-(3-hydroxyphenyl)propanoate + NADH + O2 + H(+) = 3-(2,3-dihydroxyphenyl)propanoate + NAD(+) + H2O. The enzyme catalyses (2E)-3-(3-hydroxyphenyl)prop-2-enoate + NADH + O2 + H(+) = (2E)-3-(2,3-dihydroxyphenyl)prop-2-enoate + NAD(+) + H2O. It functions in the pathway aromatic compound metabolism; 3-phenylpropanoate degradation. Catalyzes the insertion of one atom of molecular oxygen into position 2 of the phenyl ring of 3-(3-hydroxyphenyl)propionate (3-HPP) and hydroxycinnamic acid (3HCI). This Burkholderia vietnamiensis (strain G4 / LMG 22486) (Burkholderia cepacia (strain R1808)) protein is 3-(3-hydroxy-phenyl)propionate/3-hydroxycinnamic acid hydroxylase 1.